We begin with the raw amino-acid sequence, 92 residues long: Small ribosomal subunit protein uS19 (92 aa).

Belongs to the universal ribosomal protein uS19 family.

Functionally, protein S19 forms a complex with S13 that binds strongly to the 16S ribosomal RNA. The sequence is that of Small ribosomal subunit protein uS19 from Streptococcus pyogenes serotype M49 (strain NZ131).